The chain runs to 256 residues: Pimeloyl-[acyl-carrier protein] methyl ester esterase (256 aa).

In terms of domain architecture, AB hydrolase-1 spans 15 to 242; that stretch reads HLVLLHGWGL…AAHAPFISHP (228 aa). Residues tryptophan 22, 82–83, and 143–147 each bind substrate; these read SL and FLALQ. Serine 82 functions as the Nucleophile in the catalytic mechanism. Residues aspartate 207 and histidine 235 contribute to the active site. Histidine 235 provides a ligand contact to substrate.

Belongs to the AB hydrolase superfamily. Carboxylesterase BioH family. In terms of assembly, monomer.

It is found in the cytoplasm. The catalysed reaction is 6-carboxyhexanoyl-[ACP] methyl ester + H2O = 6-carboxyhexanoyl-[ACP] + methanol + H(+). The protein operates within cofactor biosynthesis; biotin biosynthesis. In terms of biological role, the physiological role of BioH is to remove the methyl group introduced by BioC when the pimeloyl moiety is complete. It allows to synthesize pimeloyl-ACP via the fatty acid synthetic pathway through the hydrolysis of the ester bonds of pimeloyl-ACP esters. The sequence is that of Pimeloyl-[acyl-carrier protein] methyl ester esterase from Escherichia coli O7:K1 (strain IAI39 / ExPEC).